Reading from the N-terminus, the 154-residue chain is Myoglobin (154 aa).

The Globin domain occupies 2 to 148 (GLSDGEWQLV…FRKDMASNYK (147 aa)). Phosphoserine is present on S4. A nitrite-binding site is contributed by H65. Residue H65 coordinates O2. A Phosphothreonine modification is found at T68. H94 is a binding site for heme b.

Belongs to the globin family. Monomeric.

The protein resides in the cytoplasm. It is found in the sarcoplasm. It catalyses the reaction Fe(III)-heme b-[protein] + nitric oxide + H2O = Fe(II)-heme b-[protein] + nitrite + 2 H(+). The enzyme catalyses H2O2 + AH2 = A + 2 H2O. Its function is as follows. Monomeric heme protein which primary function is to store oxygen and facilitate its diffusion within muscle tissues. Reversibly binds oxygen through a pentacoordinated heme iron and enables its timely and efficient release as needed during periods of heightened demand. Depending on the oxidative conditions of tissues and cells, and in addition to its ability to bind oxygen, it also has a nitrite reductase activity whereby it regulates the production of bioactive nitric oxide. Under stress conditions, like hypoxia and anoxia, it also protects cells against reactive oxygen species thanks to its pseudoperoxidase activity. This chain is Myoglobin (MB), found in Pongo pygmaeus (Bornean orangutan).